The following is a 307-amino-acid chain: Ribonuclease H2 subunit B (307 aa).

The residue at position 2 (alanine 2) is an N-acetylalanine. N6-acetyllysine is present on lysine 291. Serine 292 carries the post-translational modification Phosphoserine.

The protein belongs to the RNase H2 subunit B family. As to quaternary structure, the RNase H2 complex is a heterotrimer composed of the catalytic subunit RNASEH2A and the non-catalytic subunits RNASEH2B and RNASEH2C.

It is found in the nucleus. Its function is as follows. Non catalytic subunit of RNase H2, an endonuclease that specifically degrades the RNA of RNA:DNA hybrids. Participates in DNA replication, possibly by mediating the removal of lagging-strand Okazaki fragment RNA primers during DNA replication. Mediates the excision of single ribonucleotides from DNA:RNA duplexes. This is Ribonuclease H2 subunit B (Rnaseh2b) from Rattus norvegicus (Rat).